The chain runs to 942 residues: Lon protease homolog 4, chloroplastic/mitochondrial (942 aa).

S54 carries the post-translational modification Phosphoserine. Positions 79–301 (VIALPLPHKP…LTLELVKKEV (223 aa)) constitute a Lon N-terminal domain. 456–463 (GPTGVGKT) provides a ligand contact to ATP. The tract at residues 673-725 (ISDDVTTDTEETKSLAKTDLESPETSAEGSTVLTDELATGDPTESTTEQSGEV) is disordered. Positions 682–692 (EETKSLAKTDL) are enriched in basic and acidic residues. Polar residues predominate over residues 695–705 (PETSAEGSTVL). One can recognise a Lon proteolytic domain in the interval 756 to 940 (QTPVGVVMGL…EQIFELAFGY (185 aa)). Active-site residues include S846 and K889.

The protein belongs to the peptidase S16 family. As to quaternary structure, homohexamer or homoheptamer. Organized in a ring with a central cavity.

Its subcellular location is the mitochondrion matrix. It localises to the plastid. The protein resides in the chloroplast thylakoid membrane. The catalysed reaction is Hydrolysis of proteins in presence of ATP.. Functionally, ATP-dependent serine protease that mediates the selective degradation of misfolded, unassembled or oxidatively damaged polypeptides as well as certain short-lived regulatory proteins in the mitochondrial matrix. May also have a chaperone function in the assembly of inner membrane protein complexes. Participates in the regulation of mitochondrial gene expression and in the maintenance of the integrity of the mitochondrial genome. Binds to mitochondrial DNA in a site-specific manner. This chain is Lon protease homolog 4, chloroplastic/mitochondrial (LON4), found in Arabidopsis thaliana (Mouse-ear cress).